We begin with the raw amino-acid sequence, 382 residues long: Draxin-A (382 aa).

An N-terminal signal peptide occupies residues Met1 to Ser22. Disordered regions lie at residues Thr28 to Pro213, Leu233 to Gln252, and Val275 to Val297. Over residues Arg73–Gly82 the composition is skewed to low complexity. Residues Gly139–Gly149 are compositionally biased toward basic residues. The span at Ser190–Ser201 shows a compositional bias: low complexity. A compositionally biased stretch (basic residues) spans Ser281–Lys290. Asn291 and Asn296 each carry an N-linked (GlcNAc...) asparagine glycan.

The protein belongs to the draxin family.

The protein resides in the secreted. In terms of biological role, chemorepulsive axon guidance protein required for the development of spinal cord and forebrain commissures. Acts as a chemorepulsive guidance protein for commissural axons during development. Able to inhibit or repel neurite outgrowth from dorsal spinal cord. The polypeptide is Draxin-A (draxin-A) (Salmo salar (Atlantic salmon)).